Reading from the N-terminus, the 358-residue chain is tRNA-specific 2-thiouridylase MnmA (358 aa).

ATP-binding positions include 7–14 (AMSGGVDS) and Leu-33. The active-site Nucleophile is the Cys-101. Cys-101 and Cys-197 form a disulfide bridge. Gly-125 provides a ligand contact to ATP. The segment at 147–149 (KDQ) is interaction with tRNA. Residue Cys-197 is the Cysteine persulfide intermediate of the active site.

The protein belongs to the MnmA/TRMU family.

The protein localises to the cytoplasm. It catalyses the reaction S-sulfanyl-L-cysteinyl-[protein] + uridine(34) in tRNA + AH2 + ATP = 2-thiouridine(34) in tRNA + L-cysteinyl-[protein] + A + AMP + diphosphate + H(+). In terms of biological role, catalyzes the 2-thiolation of uridine at the wobble position (U34) of tRNA, leading to the formation of s(2)U34. The protein is tRNA-specific 2-thiouridylase MnmA of Rickettsia typhi (strain ATCC VR-144 / Wilmington).